Here is a 279-residue protein sequence, read N- to C-terminus: Gas vesicle protein L2 (279 aa).

The protein belongs to the gas vesicle GvpF/GvpL family. GvpF to GvpM interact with each other in vitro, and may form multi-subunit complex(es). Interacts with GvpC, GvpN and GvpO.

It localises to the gas vesicle. In terms of biological role, proteins GvpF to GvpM might be involved in nucleating gas vesicle formation. A minor component of the gas vesicle. Gas vesicles are hollow, gas filled proteinaceous nanostructures found in several microbial planktonic microorganisms. They allow positioning of halobacteria at the optimal depth for growth in the poorly aerated, shallow brine pools of their habitat. Its function is as follows. Expression of 2 c-vac DNA fragments containing 2 divergently transcribed regions (gvpE-gvpF-gvpG-gvpH-gvpI-gvpJ-gvpK-gvpL-gvpM and gvpA-gvpC-gvpN-gvpO) allows H.volcanii to produce gas vesicles. The sequence is that of Gas vesicle protein L2 from Halobacterium salinarum (strain ATCC 700922 / JCM 11081 / NRC-1) (Halobacterium halobium).